The sequence spans 329 residues: Prostaglandin reductase 1 (329 aa).

Threonine 18 carries the post-translational modification Phosphothreonine. Serine 20 carries the post-translational modification Phosphoserine. NADP(+) contacts are provided by residues 152-155, lysine 178, tyrosine 193, asparagine 217, 239-245, 270-272, and asparagine 321; these read GAVG, CGAISVY, and FIV. Residue lysine 178 is modified to N6-(2-hydroxyisobutyryl)lysine; alternate. Lysine 178 is modified (N6-acetyllysine; alternate).

This sequence belongs to the NADP-dependent oxidoreductase L4BD family. Monomer or homodimer. In terms of tissue distribution, detected in small intestine, kidney, liver, spleen and stomach (at protein level). Detected in small intestine, kidney and liver.

Its subcellular location is the cytoplasm. The enzyme catalyses 13,14-dihydro-15-oxo-prostaglandin E1 + NADP(+) = 15-oxoprostaglandin E1 + NADPH + H(+). The catalysed reaction is 13,14-dihydro-15-oxo-prostaglandin E2 + NAD(+) = 15-oxoprostaglandin E2 + NADH + H(+). It carries out the reaction 13,14-dihydro-15-oxo-prostaglandin F1alpha + NADP(+) = 15-oxoprostaglandin F1alpha + NADPH + H(+). It catalyses the reaction 13,14-dihydro-15-oxo-PGF2alpha + NADP(+) = 15-oxoprostaglandin F2alpha + NADPH + H(+). The enzyme catalyses leukotriene B4 + NADP(+) = 12-oxo-leukotriene B4 + NADPH + H(+). The catalysed reaction is 20-hydroxy-leukotriene B4 + NADP(+) = 12-oxo-20-hydroxy-leukotriene B4 + NADPH + H(+). It carries out the reaction 6-trans-leukotriene B4 + NADP(+) = 12-oxo-(5S)-hydroxy-(6E,8E,10E,14Z)-eicosatetraenoate + NADPH + H(+). It catalyses the reaction (5S,12S)-dihydroxy-(6E,10E,12E,14Z)-eicosatetraenoate + NADP(+) = 12-oxo-(5S)-hydroxy-(6E,8E,10E,14Z)-eicosatetraenoate + NADPH + H(+). The enzyme catalyses an n-alkanal + NADP(+) = an alk-2-enal + NADPH + H(+). The catalysed reaction is hexanal + NADP(+) = (E)-hex-2-enal + NADPH + H(+). It carries out the reaction octanal + NADP(+) = (2E)-octenal + NADPH + H(+). It catalyses the reaction decanal + NADP(+) = (2E)-decenal + NADPH + H(+). The enzyme catalyses dodecanal + NADP(+) = (2E)-dodecenal + NADPH + H(+). The catalysed reaction is 4-hydroxynonanal + NADP(+) = (E)-4-hydroxynon-2-enal + NADPH + H(+). It carries out the reaction pentan-2-one + NADP(+) = (E)-pent-3-en-2-one + NADPH + H(+). It catalyses the reaction nonan-2-one + NADP(+) = (3E)-nonen-2-one + NADPH + H(+). NAD(P)H-dependent oxidoreductase involved in metabolic inactivation of pro- and anti-inflammatory eicosanoids: prostaglandins (PG), leukotrienes (LT) and lipoxins (LX). Catalyzes with high efficiency the reduction of the 13,14 double bond of 15-oxoPGs, including 15-oxo-PGE1, 15-oxo-PGE2, 15-oxo-PGF1-alpha and 15-oxo-PGF2-alpha. Catalyzes with lower efficiency the oxidation of the hydroxyl group at C12 of LTB4 and its derivatives, converting them into biologically less active 12-oxo-LTB4 metabolites. Reduces 15-oxo-LXA4 to 13,14 dihydro-15-oxo-LXA4, enhancing neutrophil recruitment at the inflammatory site. Plays a role in metabolic detoxification of alkenals and ketones. Reduces alpha,beta-unsaturated alkenals and ketones, particularly those with medium-chain length, showing highest affinity toward (2E)-decenal and (3E)-3-nonen-2-one. May inactivate 4-hydroxy-2-nonenal, a cytotoxic lipid constituent of oxidized low-density lipoprotein particles. This chain is Prostaglandin reductase 1 (Ptgr1), found in Cavia porcellus (Guinea pig).